Here is a 337-residue protein sequence, read N- to C-terminus: Holliday junction branch migration complex subunit RuvB (337 aa).

A large ATPase domain (RuvB-L) region spans residues 1–179 (MTHQVSVLHQ…FSFTGRMSYY (179 aa)). ATP contacts are provided by residues Leu-18, Arg-19, Gly-60, Lys-63, Thr-64, Ser-65, 126 to 128 (EDY), Arg-169, Tyr-179, and Arg-216. Thr-64 lines the Mg(2+) pocket. Positions 180–250 (SDEDLTTILK…VAEKALAMLL (71 aa)) are small ATPAse domain (RuvB-S). The interval 253–337 (DWGLNEIDIK…DNLQSLGEEK (85 aa)) is head domain (RuvB-H). Residues Lys-308 and Arg-313 each coordinate DNA.

It belongs to the RuvB family. Homohexamer. Forms an RuvA(8)-RuvB(12)-Holliday junction (HJ) complex. HJ DNA is sandwiched between 2 RuvA tetramers; dsDNA enters through RuvA and exits via RuvB. An RuvB hexamer assembles on each DNA strand where it exits the tetramer. Each RuvB hexamer is contacted by two RuvA subunits (via domain III) on 2 adjacent RuvB subunits; this complex drives branch migration. In the full resolvosome a probable DNA-RuvA(4)-RuvB(12)-RuvC(2) complex forms which resolves the HJ.

It is found in the cytoplasm. The catalysed reaction is ATP + H2O = ADP + phosphate + H(+). Functionally, the RuvA-RuvB-RuvC complex processes Holliday junction (HJ) DNA during genetic recombination and DNA repair, while the RuvA-RuvB complex plays an important role in the rescue of blocked DNA replication forks via replication fork reversal (RFR). RuvA specifically binds to HJ cruciform DNA, conferring on it an open structure. The RuvB hexamer acts as an ATP-dependent pump, pulling dsDNA into and through the RuvAB complex. RuvB forms 2 homohexamers on either side of HJ DNA bound by 1 or 2 RuvA tetramers; 4 subunits per hexamer contact DNA at a time. Coordinated motions by a converter formed by DNA-disengaged RuvB subunits stimulates ATP hydrolysis and nucleotide exchange. Immobilization of the converter enables RuvB to convert the ATP-contained energy into a lever motion, pulling 2 nucleotides of DNA out of the RuvA tetramer per ATP hydrolyzed, thus driving DNA branch migration. The RuvB motors rotate together with the DNA substrate, which together with the progressing nucleotide cycle form the mechanistic basis for DNA recombination by continuous HJ branch migration. Branch migration allows RuvC to scan DNA until it finds its consensus sequence, where it cleaves and resolves cruciform DNA. This Chlamydia caviae (strain ATCC VR-813 / DSM 19441 / 03DC25 / GPIC) (Chlamydophila caviae) protein is Holliday junction branch migration complex subunit RuvB.